We begin with the raw amino-acid sequence, 356 residues long: Phosphoribosylformylglycinamidine cyclo-ligase (356 aa).

This sequence belongs to the AIR synthase family.

Its subcellular location is the cytoplasm. It catalyses the reaction 2-formamido-N(1)-(5-O-phospho-beta-D-ribosyl)acetamidine + ATP = 5-amino-1-(5-phospho-beta-D-ribosyl)imidazole + ADP + phosphate + H(+). The protein operates within purine metabolism; IMP biosynthesis via de novo pathway; 5-amino-1-(5-phospho-D-ribosyl)imidazole from N(2)-formyl-N(1)-(5-phospho-D-ribosyl)glycinamide: step 2/2. This chain is Phosphoribosylformylglycinamidine cyclo-ligase, found in Sinorhizobium fredii (strain NBRC 101917 / NGR234).